The primary structure comprises 145 residues: uncharacterized protein (145 aa).

The signal sequence occupies residues 1-22 (MLTRLVLSAHLSSTTSPPWTHA). N-linked (GlcNAc...) asparagine glycosylation occurs at N98. The segment at 103–145 (SSGQQRQAARQEEENSICKAHDSREGRLGYPLSAHQPGSGGPN) is disordered.

The protein resides in the secreted. This is an uncharacterized protein from Homo sapiens (Human).